The primary structure comprises 202 residues: Peptide deformylase (202 aa).

The tract at residues 1-24 (MAGSFAQLAKNAEKKKPSISVSKE) is disordered. Fe cation is bound by residues C121 and H163. E164 is a catalytic residue. H167 contacts Fe cation.

This sequence belongs to the polypeptide deformylase family. It depends on Fe(2+) as a cofactor.

The catalysed reaction is N-terminal N-formyl-L-methionyl-[peptide] + H2O = N-terminal L-methionyl-[peptide] + formate. Removes the formyl group from the N-terminal Met of newly synthesized proteins. Requires at least a dipeptide for an efficient rate of reaction. N-terminal L-methionine is a prerequisite for activity but the enzyme has broad specificity at other positions. In Prochlorococcus marinus (strain NATL2A), this protein is Peptide deformylase.